The chain runs to 824 residues: Glycerol-3-phosphate acyltransferase (824 aa).

Residues 302–307 carry the HXXXXD motif motif; that stretch reads CHRSHM.

This sequence belongs to the GPAT/DAPAT family.

Its subcellular location is the cell inner membrane. It catalyses the reaction sn-glycerol 3-phosphate + an acyl-CoA = a 1-acyl-sn-glycero-3-phosphate + CoA. The protein operates within phospholipid metabolism; CDP-diacylglycerol biosynthesis; CDP-diacylglycerol from sn-glycerol 3-phosphate: step 1/3. This is Glycerol-3-phosphate acyltransferase from Actinobacillus pleuropneumoniae serotype 7 (strain AP76).